The following is a 153-amino-acid chain: Endoribonuclease YbeY (153 aa).

3 residues coordinate Zn(2+): His-116, His-120, and His-126.

The protein belongs to the endoribonuclease YbeY family. It depends on Zn(2+) as a cofactor.

The protein resides in the cytoplasm. In terms of biological role, single strand-specific metallo-endoribonuclease involved in late-stage 70S ribosome quality control and in maturation of the 3' terminus of the 16S rRNA. The polypeptide is Endoribonuclease YbeY (Clavibacter sepedonicus (Clavibacter michiganensis subsp. sepedonicus)).